The chain runs to 338 residues: Glycerol-3-phosphate dehydrogenase [NAD(P)+] (338 aa).

NADPH-binding residues include serine 13, tryptophan 14, and lysine 108. Residues lysine 108, glycine 139, and serine 141 each coordinate sn-glycerol 3-phosphate. Residue alanine 143 coordinates NADPH. Residues lysine 194, aspartate 247, serine 257, arginine 258, and asparagine 259 each contribute to the sn-glycerol 3-phosphate site. Lysine 194 acts as the Proton acceptor in catalysis. Arginine 258 is a binding site for NADPH. NADPH contacts are provided by valine 282 and glutamate 284.

This sequence belongs to the NAD-dependent glycerol-3-phosphate dehydrogenase family.

Its subcellular location is the cytoplasm. The enzyme catalyses sn-glycerol 3-phosphate + NAD(+) = dihydroxyacetone phosphate + NADH + H(+). It catalyses the reaction sn-glycerol 3-phosphate + NADP(+) = dihydroxyacetone phosphate + NADPH + H(+). It functions in the pathway membrane lipid metabolism; glycerophospholipid metabolism. Its function is as follows. Catalyzes the reduction of the glycolytic intermediate dihydroxyacetone phosphate (DHAP) to sn-glycerol 3-phosphate (G3P), the key precursor for phospholipid synthesis. The chain is Glycerol-3-phosphate dehydrogenase [NAD(P)+] from Streptococcus pneumoniae (strain P1031).